A 355-amino-acid polypeptide reads, in one-letter code: Gibberellin 3-beta-dioxygenase 4 (355 aa).

A Fe2OG dioxygenase domain is found at 203–303 (GRGAIRLNHY…RISIAYLWGG (101 aa)). Fe cation-binding residues include His-227, Asp-229, and His-284. Arg-294 is an active-site residue.

It belongs to the iron/ascorbate-dependent oxidoreductase family. GA3OX subfamily. It depends on L-ascorbate as a cofactor. Fe cation serves as cofactor. Expressed in siliques and in seeds, specifically at the rim of the embryo and the outer integument. Also expressed in flowers. Not detected in roots, stems and leaves.

It catalyses the reaction gibberellin A20 + 2-oxoglutarate + O2 = gibberellin A1 + succinate + CO2. It functions in the pathway plant hormone biosynthesis; gibberellin biosynthesis. Functionally, converts the inactive gibberellin (GA) precursors GA9 and GA20 in the bioactives gibberellins GA4 and GA1. Involved in the production of bioactive GA for reproductive development. The sequence is that of Gibberellin 3-beta-dioxygenase 4 from Arabidopsis thaliana (Mouse-ear cress).